Here is a 98-residue protein sequence, read N- to C-terminus: Integration host factor subunit alpha (98 aa).

Positions 49 to 72 are disordered; the sequence is FGNFDLRDKNQRPGRNPKTGEDIP.

This sequence belongs to the bacterial histone-like protein family. As to quaternary structure, heterodimer of an alpha and a beta chain.

Its function is as follows. This protein is one of the two subunits of integration host factor, a specific DNA-binding protein that functions in genetic recombination as well as in transcriptional and translational control. In Shewanella loihica (strain ATCC BAA-1088 / PV-4), this protein is Integration host factor subunit alpha.